The chain runs to 34 residues: Photosystem II reaction center protein M (34 aa).

A helical transmembrane segment spans residues 7–27; it reads GFVASLLFVLVPTVFLIILFI.

It belongs to the PsbM family. In terms of assembly, PSII is composed of 1 copy each of membrane proteins PsbA, PsbB, PsbC, PsbD, PsbE, PsbF, PsbH, PsbI, PsbJ, PsbK, PsbL, PsbM, PsbT, PsbX, PsbY, PsbZ, Psb30/Ycf12, peripheral proteins PsbO, CyanoQ (PsbQ), PsbU, PsbV and a large number of cofactors. It forms dimeric complexes.

It localises to the cellular thylakoid membrane. In terms of biological role, one of the components of the core complex of photosystem II (PSII). PSII is a light-driven water:plastoquinone oxidoreductase that uses light energy to abstract electrons from H(2)O, generating O(2) and a proton gradient subsequently used for ATP formation. It consists of a core antenna complex that captures photons, and an electron transfer chain that converts photonic excitation into a charge separation. This subunit is found at the monomer-monomer interface. In Synechococcus sp. (strain WH7803), this protein is Photosystem II reaction center protein M.